The chain runs to 335 residues: 4-hydroxy-3-methylbut-2-enyl diphosphate reductase 2 (335 aa).

[4Fe-4S] cluster is bound at residue C37. Positions 66 and 99 each coordinate (2E)-4-hydroxy-3-methylbut-2-enyl diphosphate. The dimethylallyl diphosphate site is built by H66 and H99. The isopentenyl diphosphate site is built by H66 and H99. Residue C121 participates in [4Fe-4S] cluster binding. (2E)-4-hydroxy-3-methylbut-2-enyl diphosphate is bound at residue H149. Position 149 (H149) interacts with dimethylallyl diphosphate. H149 lines the isopentenyl diphosphate pocket. E151 serves as the catalytic Proton donor. T189 provides a ligand contact to (2E)-4-hydroxy-3-methylbut-2-enyl diphosphate. A [4Fe-4S] cluster-binding site is contributed by C219. Positions 247, 248, 249, and 292 each coordinate (2E)-4-hydroxy-3-methylbut-2-enyl diphosphate. 4 residues coordinate dimethylallyl diphosphate: S247, S248, N249, and S292. Residues S247, S248, N249, and S292 each coordinate isopentenyl diphosphate.

The protein belongs to the IspH family. [4Fe-4S] cluster is required as a cofactor.

The enzyme catalyses isopentenyl diphosphate + 2 oxidized [2Fe-2S]-[ferredoxin] + H2O = (2E)-4-hydroxy-3-methylbut-2-enyl diphosphate + 2 reduced [2Fe-2S]-[ferredoxin] + 2 H(+). The catalysed reaction is dimethylallyl diphosphate + 2 oxidized [2Fe-2S]-[ferredoxin] + H2O = (2E)-4-hydroxy-3-methylbut-2-enyl diphosphate + 2 reduced [2Fe-2S]-[ferredoxin] + 2 H(+). It functions in the pathway isoprenoid biosynthesis; dimethylallyl diphosphate biosynthesis; dimethylallyl diphosphate from (2E)-4-hydroxy-3-methylbutenyl diphosphate: step 1/1. It participates in isoprenoid biosynthesis; isopentenyl diphosphate biosynthesis via DXP pathway; isopentenyl diphosphate from 1-deoxy-D-xylulose 5-phosphate: step 6/6. Functionally, catalyzes the conversion of 1-hydroxy-2-methyl-2-(E)-butenyl 4-diphosphate (HMBPP) into a mixture of isopentenyl diphosphate (IPP) and dimethylallyl diphosphate (DMAPP). Acts in the terminal step of the DOXP/MEP pathway for isoprenoid precursor biosynthesis. Has a higher activity compared with LytB2. Is essential for M.tuberculosis growth in vitro. This is 4-hydroxy-3-methylbut-2-enyl diphosphate reductase 2 from Mycobacterium tuberculosis (strain ATCC 25618 / H37Rv).